Reading from the N-terminus, the 267-residue chain is Pyridoxine/pyridoxamine 5'-phosphate oxidase (267 aa).

Residues Arg20–Tyr23 and Lys80 each bind substrate. FMN is bound by residues Arg75–Lys80, Tyr90–Thr91, Arg96, Lys97, and Gln119. Substrate is bound by residues Tyr137, Arg141, and Ser145. FMN contacts are provided by residues Gln154–Ser155 and Trp200. Arg206–His208 is a substrate binding site. Arg210 serves as a coordination point for FMN.

The protein belongs to the pyridoxamine 5'-phosphate oxidase family. Homodimer. The cofactor is FMN.

It carries out the reaction pyridoxamine 5'-phosphate + O2 + H2O = pyridoxal 5'-phosphate + H2O2 + NH4(+). The enzyme catalyses pyridoxine 5'-phosphate + O2 = pyridoxal 5'-phosphate + H2O2. The protein operates within cofactor metabolism; pyridoxal 5'-phosphate salvage; pyridoxal 5'-phosphate from pyridoxamine 5'-phosphate: step 1/1. It functions in the pathway cofactor metabolism; pyridoxal 5'-phosphate salvage; pyridoxal 5'-phosphate from pyridoxine 5'-phosphate: step 1/1. Catalyzes the oxidation of either pyridoxine 5'-phosphate (PNP) or pyridoxamine 5'-phosphate (PMP) into pyridoxal 5'-phosphate (PLP). The chain is Pyridoxine/pyridoxamine 5'-phosphate oxidase from Frankia casuarinae (strain DSM 45818 / CECT 9043 / HFP020203 / CcI3).